A 301-amino-acid polypeptide reads, in one-letter code: Nucleotide-binding protein Noca_2527 (301 aa).

26–33 (GMTGAGRS) is a binding site for ATP. Residue 77–80 (DVRS) participates in GTP binding.

The protein belongs to the RapZ-like family.

Displays ATPase and GTPase activities. In Nocardioides sp. (strain ATCC BAA-499 / JS614), this protein is Nucleotide-binding protein Noca_2527.